The sequence spans 211 residues: MPTIIMDSCNYTRLGLSDYMSSKGVKKKNITSVSDIEQLQQRCEQLKPGVVFINEDCFIHETDSSERIRSIINQHPETLFFIFMAISNIHFEEYLYVRKNLIITSKAIKPSTLDSLLSTYLQKKLNMSPRISSGLDVHPLTLSQTESNMLKMWMSGHDTIQISDKMQIKAKTVSSHKGNIKRKIKTHNKQVIYHVVRLTDNVTSGIYVNVR.

An HTH luxR-type domain is found at 135–200; that stretch reads LDVHPLTLSQ…VIYHVVRLTD (66 aa). Residues 159 to 178 constitute a DNA-binding region (H-T-H motif); sequence TIQISDKMQIKAKTVSSHKG.

The protein belongs to the RcsA family.

In terms of biological role, component of the Rcs signaling system, which controls transcription of numerous genes. Binds to DNA to regulate expression of genes. This chain is Transcriptional regulatory protein RcsA, found in Pantoea stewartii subsp. stewartii (Erwinia stewartii).